The sequence spans 333 residues: Large ribosomal subunit protein mL44 (333 aa).

The transit peptide at 1–30 (MASAVFRLLQQGPRRLLAPAVPTLAPPVRG) directs the protein to the mitochondrion. The RNase III domain occupies 86–228 (DLLKTAFINS…LITQMTGKEL (143 aa)). The 71-residue stretch at 236-306 (NPMGLLVEEL…ARVALRKLYG (71 aa)) folds into the DRBM domain. Residues 311 to 327 (RRPWDYSKPKESPKRAE) show a composition bias toward basic and acidic residues. Positions 311-333 (RRPWDYSKPKESPKRAEQTSVAS) are disordered.

The protein belongs to the ribonuclease III family. Mitochondrion-specific ribosomal protein mL44 subfamily. In terms of assembly, component of the mitochondrial ribosome large subunit (39S) which comprises a 16S rRNA and about 50 distinct proteins.

The protein localises to the mitochondrion. Component of the 39S subunit of mitochondrial ribosome. May have a function in the assembly/stability of nascent mitochondrial polypeptides exiting the ribosome. In Mus musculus (Mouse), this protein is Large ribosomal subunit protein mL44 (Mrpl44).